The primary structure comprises 62 residues: DNA gyrase inhibitor YacG (62 aa).

Positions 8, 11, 27, and 31 each coordinate Zn(2+).

The protein belongs to the DNA gyrase inhibitor YacG family. As to quaternary structure, interacts with GyrB. Zn(2+) serves as cofactor.

In terms of biological role, inhibits all the catalytic activities of DNA gyrase by preventing its interaction with DNA. Acts by binding directly to the C-terminal domain of GyrB, which probably disrupts DNA binding by the gyrase. This chain is DNA gyrase inhibitor YacG, found in Actinobacillus pleuropneumoniae serotype 5b (strain L20).